The chain runs to 532 residues: Cytochrome P450 monooxygenase pgmC (532 aa).

The helical transmembrane segment at 15–32 threads the bilayer; sequence ISTLAVLIGFIALLTAWL. C438 provides a ligand contact to heme.

The protein belongs to the cytochrome P450 family. It depends on heme as a cofactor.

It localises to the membrane. It participates in pigment biosynthesis. Its pathway is secondary metabolite biosynthesis. In terms of biological role, cytochrome P450 monooxygenase; part of the gene cluster that mediates the biosynthesis of pleosporalin A, ascomycone A, as well as a third cryptic naphthoquinone derived pigment, all responsible for the coloration of conidia. Involved in the oxidation of fusarubinaldehyde at C-9. PgmC has low substrate-specificity and is also able to use the pgmA product 3-acetonyl-1,6,8-trihydroxy-2-naphthaldehyde as a substrate. The pathway begins with the biosynthesis of the cyclized heptaketide 3-acetonyl-1,6,8-trihydroxy-2-naphthaldehyde by the NR-PKS pgmA. The C-6 hydroxyl group is further methylated by the O-methyltransferase pgmB to yield fusarubinaldehyde which is in turn oxidized by the cytochrome P450 monooxygenase pgmC at C-9. The C-1 hydroxyl group is then methylated spontaneously. Although pgmE, pgmD and pgmH are essential for the production of pleosporalin A, it is not the case for the 2 other final products and it remains difficult to assign a specific function to each enzyme. PgmF and pgmG seem not to be involved in pigment biosynthesis although they were regulated by the cluster-specific transcription factor pgmR. This Aspergillus terreus (strain NIH 2624 / FGSC A1156) protein is Cytochrome P450 monooxygenase pgmC.